Here is a 154-residue protein sequence, read N- to C-terminus: Interleukin-2 (154 aa).

An N-terminal signal peptide occupies residues 1-20; it reads MYRMQLLSCIALSLALITNS. The O-linked (GalNAc...) threonine glycan is linked to Thr-23. Cysteines 78 and 126 form a disulfide.

It belongs to the IL-2 family.

It localises to the secreted. Its function is as follows. Cytokine produced by activated CD4-positive helper T-cells and to a lesser extend activated CD8-positive T-cells and natural killer (NK) cells that plays pivotal roles in the immune response and tolerance. Binds to a receptor complex composed of either the high-affinity trimeric IL-2R (IL2RA/CD25, IL2RB/CD122 and IL2RG/CD132) or the low-affinity dimeric IL-2R (IL2RB and IL2RG). Interaction with the receptor leads to oligomerization and conformation changes in the IL-2R subunits resulting in downstream signaling starting with phosphorylation of JAK1 and JAK3. In turn, JAK1 and JAK3 phosphorylate the receptor to form a docking site leading to the phosphorylation of several substrates including STAT5. This process leads to activation of several pathways including STAT, phosphoinositide-3-kinase/PI3K and mitogen-activated protein kinase/MAPK pathways. Functions as a T-cell growth factor and can increase NK-cell cytolytic activity as well. Promotes strong proliferation of activated B-cells and subsequently immunoglobulin production. Plays a pivotal role in regulating the adaptive immune system by controlling the survival and proliferation of regulatory T-cells, which are required for the maintenance of immune tolerance. Moreover, participates in the differentiation and homeostasis of effector T-cell subsets, including Th1, Th2, Th17 as well as memory CD8-positive T-cells. The protein is Interleukin-2 (IL2) of Papio hamadryas (Hamadryas baboon).